Consider the following 53-residue polypeptide: Lupus La protein homolog (53 aa).

Residues 1-13 (GKVEFQGKKTKFD) are compositionally biased toward basic and acidic residues. The segment at 1-53 (GKVEFQGKKTKFDSDDERNENGAAGPVKRAREETDKEEPASKQQKTENGAGDQ) is disordered. The residue at position 8 (lysine 8) is an N6-acetyllysine. A Phosphothreonine modification is found at threonine 10. Serine 14 carries the post-translational modification Phosphoserine. Residues 29 to 40 (RAREETDKEEPA) show a composition bias toward basic and acidic residues.

In terms of assembly, interacts with DDX15. May interact with RUFY1. Post-translationally, phosphorylated.

It localises to the nucleus. Functionally, binds to the 3' poly(U) terminus of nascent RNA polymerase III transcripts, protecting them from exonuclease digestion and facilitating their folding and maturation. In Oryctolagus cuniculus (Rabbit), this protein is Lupus La protein homolog (SSB).